A 125-amino-acid chain; its full sequence is Small ribosomal subunit protein uS12 (125 aa).

A disordered region spans residues 9–31 (RQGREVEKIKSKSPAMENSPQRR). 3-methylthioaspartic acid is present on aspartate 89.

Belongs to the universal ribosomal protein uS12 family. As to quaternary structure, part of the 30S ribosomal subunit. Contacts proteins S8 and S17. May interact with IF1 in the 30S initiation complex.

Its function is as follows. With S4 and S5 plays an important role in translational accuracy. In terms of biological role, interacts with and stabilizes bases of the 16S rRNA that are involved in tRNA selection in the A site and with the mRNA backbone. Located at the interface of the 30S and 50S subunits, it traverses the body of the 30S subunit contacting proteins on the other side and probably holding the rRNA structure together. The combined cluster of proteins S8, S12 and S17 appears to hold together the shoulder and platform of the 30S subunit. This Verminephrobacter eiseniae (strain EF01-2) protein is Small ribosomal subunit protein uS12.